Reading from the N-terminus, the 412-residue chain is Multifunctional CCA protein (412 aa).

Glycine 8 and arginine 11 together coordinate ATP. CTP is bound by residues glycine 8 and arginine 11. Mg(2+)-binding residues include aspartate 21 and aspartate 23. The ATP site is built by arginine 91, arginine 137, and arginine 140. The CTP site is built by arginine 91, arginine 137, and arginine 140. The HD domain occupies 228–329; that stretch reads TGIHTLMTLS…VKLFDSIDAW (102 aa).

It belongs to the tRNA nucleotidyltransferase/poly(A) polymerase family. Bacterial CCA-adding enzyme type 1 subfamily. In terms of assembly, monomer. Can also form homodimers and oligomers. The cofactor is Mg(2+). Requires Ni(2+) as cofactor.

It catalyses the reaction a tRNA precursor + 2 CTP + ATP = a tRNA with a 3' CCA end + 3 diphosphate. The enzyme catalyses a tRNA with a 3' CCA end + 2 CTP + ATP = a tRNA with a 3' CCACCA end + 3 diphosphate. Its function is as follows. Catalyzes the addition and repair of the essential 3'-terminal CCA sequence in tRNAs without using a nucleic acid template. Adds these three nucleotides in the order of C, C, and A to the tRNA nucleotide-73, using CTP and ATP as substrates and producing inorganic pyrophosphate. tRNA 3'-terminal CCA addition is required both for tRNA processing and repair. Also involved in tRNA surveillance by mediating tandem CCA addition to generate a CCACCA at the 3' terminus of unstable tRNAs. While stable tRNAs receive only 3'-terminal CCA, unstable tRNAs are marked with CCACCA and rapidly degraded. This chain is Multifunctional CCA protein, found in Escherichia coli O6:H1 (strain CFT073 / ATCC 700928 / UPEC).